The chain runs to 277 residues: 3-methyl-2-oxobutanoate hydroxymethyltransferase (277 aa).

Residues D42 and D81 each coordinate Mg(2+). Residues 42–43 (DS), D81, and K110 contribute to the 3-methyl-2-oxobutanoate site. Position 112 (E112) interacts with Mg(2+). The Proton acceptor role is filled by E179.

The protein belongs to the PanB family. In terms of assembly, homodecamer; pentamer of dimers. Mg(2+) is required as a cofactor.

Its subcellular location is the cytoplasm. The enzyme catalyses 3-methyl-2-oxobutanoate + (6R)-5,10-methylene-5,6,7,8-tetrahydrofolate + H2O = 2-dehydropantoate + (6S)-5,6,7,8-tetrahydrofolate. It participates in cofactor biosynthesis; (R)-pantothenate biosynthesis; (R)-pantoate from 3-methyl-2-oxobutanoate: step 1/2. In terms of biological role, catalyzes the reversible reaction in which hydroxymethyl group from 5,10-methylenetetrahydrofolate is transferred onto alpha-ketoisovalerate to form ketopantoate. The sequence is that of 3-methyl-2-oxobutanoate hydroxymethyltransferase from Anaplasma marginale (strain St. Maries).